A 451-amino-acid polypeptide reads, in one-letter code: AAA-ATPase At3g28570, mitochondrial (451 aa).

The N-terminal 48 residues, 1–48 (MFAENLTRIGSNVAGLFFVWSTLKRYFPRQIQQLLFNAIQRIPIFKRL), are a transit peptide targeting the mitochondrion. ATP is bound at residue 243–250 (GPPGTGKS).

It belongs to the AAA ATPase family. BCS1 subfamily. Mg(2+) serves as cofactor.

It is found in the mitochondrion. The catalysed reaction is ATP + H2O = ADP + phosphate + H(+). This Arabidopsis thaliana (Mouse-ear cress) protein is AAA-ATPase At3g28570, mitochondrial.